Here is a 256-residue protein sequence, read N- to C-terminus: Ethylene-responsive transcription factor ERF084 (256 aa).

The segment at residues 115-172 is a DNA-binding region (AP2/ERF); sequence GFMGVRKRPWGRWSAEIRDRIGRCRHWLGTFDTAEEAARAYDAAARRLRGTKAKTNFV.

This sequence belongs to the AP2/ERF transcription factor family. ERF subfamily.

Its subcellular location is the nucleus. In terms of biological role, probably acts as a transcriptional activator. Binds to the GCC-box pathogenesis-related promoter element. May be involved in the regulation of gene expression by stress factors and by components of stress signal transduction pathways. This chain is Ethylene-responsive transcription factor ERF084 (ERF084), found in Arabidopsis thaliana (Mouse-ear cress).